Consider the following 108-residue polypeptide: Pyrimidine/purine nucleoside phosphorylase (108 aa).

Belongs to the nucleoside phosphorylase PpnP family.

It carries out the reaction a purine D-ribonucleoside + phosphate = a purine nucleobase + alpha-D-ribose 1-phosphate. The enzyme catalyses adenosine + phosphate = alpha-D-ribose 1-phosphate + adenine. It catalyses the reaction cytidine + phosphate = cytosine + alpha-D-ribose 1-phosphate. The catalysed reaction is guanosine + phosphate = alpha-D-ribose 1-phosphate + guanine. It carries out the reaction inosine + phosphate = alpha-D-ribose 1-phosphate + hypoxanthine. The enzyme catalyses thymidine + phosphate = 2-deoxy-alpha-D-ribose 1-phosphate + thymine. It catalyses the reaction uridine + phosphate = alpha-D-ribose 1-phosphate + uracil. The catalysed reaction is xanthosine + phosphate = alpha-D-ribose 1-phosphate + xanthine. In terms of biological role, catalyzes the phosphorolysis of diverse nucleosides, yielding D-ribose 1-phosphate and the respective free bases. Can use uridine, adenosine, guanosine, cytidine, thymidine, inosine and xanthosine as substrates. Also catalyzes the reverse reactions. In Acinetobacter baumannii (strain AB307-0294), this protein is Pyrimidine/purine nucleoside phosphorylase.